The sequence spans 86 residues: Omega-theraphotoxin-Hhn1c (86 aa).

An N-terminal signal peptide occupies residues 1-21 (MKSIVFVALFGLALLAVVCSA). Residues 22–50 (SEDAHKELLKEVVRAMVVDKTDAVQAEER) constitute a propeptide that is removed on maturation. 3 cysteine pairs are disulfide-bonded: Cys-52–Cys-66, Cys-59–Cys-71, and Cys-65–Cys-78.

It belongs to the neurotoxin 10 (Hwtx-1) family. 17 (Hntx-9) subfamily. As to expression, expressed by the venom gland.

The protein resides in the secreted. In terms of biological role, ion channel inhibitor. This chain is Omega-theraphotoxin-Hhn1c, found in Cyriopagopus hainanus (Chinese bird spider).